The chain runs to 293 residues: Elongation factor Ts (293 aa).

The involved in Mg(2+) ion dislocation from EF-Tu stretch occupies residues 80–83; sequence TDFV.

The protein belongs to the EF-Ts family.

The protein localises to the cytoplasm. Its function is as follows. Associates with the EF-Tu.GDP complex and induces the exchange of GDP to GTP. It remains bound to the aminoacyl-tRNA.EF-Tu.GTP complex up to the GTP hydrolysis stage on the ribosome. The protein is Elongation factor Ts of Burkholderia ambifaria (strain MC40-6).